Consider the following 132-residue polypeptide: Large ribosomal subunit protein uL14 (132 aa).

Belongs to the universal ribosomal protein uL14 family. As to quaternary structure, part of the 50S ribosomal subunit. Forms a cluster with proteins L3 and L24e, part of which may contact the 16S rRNA in 2 intersubunit bridges.

Binds to 23S rRNA. Forms part of two intersubunit bridges in the 70S ribosome. The chain is Large ribosomal subunit protein uL14 from Halobacterium salinarum (strain ATCC 29341 / DSM 671 / R1).